A 72-amino-acid polypeptide reads, in one-letter code: Protein RALF-like 20 (72 aa).

The first 27 residues, 1–27, serve as a signal peptide directing secretion; the sequence is MVLSKKTIMQSFALMIILSIVMSTTEA. Cystine bridges form between Cys43-Cys51 and Cys63-Cys69.

This sequence belongs to the plant rapid alkalinization factor (RALF) family.

The protein resides in the secreted. Its function is as follows. Cell signaling peptide that may regulate plant stress, growth, and development. Mediates a rapid alkalinization of extracellular space by mediating a transient increase in the cytoplasmic Ca(2+) concentration leading to a calcium-dependent signaling events through a cell surface receptor and a concomitant activation of some intracellular mitogen-activated protein kinases. The chain is Protein RALF-like 20 (RALFL20) from Arabidopsis thaliana (Mouse-ear cress).